The following is a 706-amino-acid chain: Frizzled-6 (706 aa).

The N-terminal stretch at 1–18 is a signal peptide; it reads MEMFTFLLTCIFLPLLRG. An FZ domain is found at 19-132; the sequence is HSLFTCEPIT…CDRLQYCDET (114 aa). Residues 19-201 are Extracellular-facing; that stretch reads HSLFTCEPIT…SDELEFAKSF (183 aa). Cystine bridges form between C24-C85, C32-C78, C69-C106, C95-C129, and C99-C123. N38 carries an N-linked (GlcNAc...) asparagine glycan. Residues 202–222 traverse the membrane as a helical segment; it reads IGTVSIFCLCATLFTFLTFLI. Residues 223-233 lie on the Cytoplasmic side of the membrane; it reads DVRRFRYPERP. The helical transmembrane segment at 234-254 threads the bilayer; it reads IIYYSVCYSIVSLMYFIGFLL. Residues 255 to 284 are Extracellular-facing; that stretch reads GDSTACNKADEKLELGDTVVLGSQNKACTV. The chain crosses the membrane as a helical span at residues 285–305; it reads LFMLLYFFTMAGTVWWVILTI. The Cytoplasmic segment spans residues 306 to 324; that stretch reads TWFLAAGRKWSCEAIEQKA. A helical transmembrane segment spans residues 325–345; it reads VWFHAVAWGTPGFLTVMLLAM. The Extracellular segment spans residues 346–370; sequence NKVEGDNISGVCFVGLYDLDASRYF. A glycan (N-linked (GlcNAc...) asparagine) is linked at N352. The helical transmembrane segment at 371-391 threads the bilayer; the sequence is VLLPLCLCVFVGLSLLLAGII. At 392 to 416 the chain is on the cytoplasmic side; sequence SLNHVRQVIQHDGRNQEKLKKFMIR. A helical membrane pass occupies residues 417 to 437; sequence IGVFSGLYLVPLVTLLGCYVY. The Extracellular segment spans residues 438-473; that stretch reads EQVNRITWEITWVSDHCRQYHIPCPYQAKAKARPEL. The helical transmembrane segment at 474–494 threads the bilayer; that stretch reads ALFMIKYLMTLIVGISAVFWV. At 495 to 706 the chain is on the cytoplasmic side; it reads GSKKTCTEWA…EQGGGCHSDT (212 aa). A Lys-Thr-X-X-X-Trp motif, mediates interaction with the PDZ domain of Dvl family members motif is present at residues 498-503; sequence KTCTEW. Residues 588–706 are disordered; the sequence is EIQTSPETSM…EQGGGCHSDT (119 aa). The span at 646-658 shows a compositional bias: basic and acidic residues; that stretch reads ARSEGRISPKSDI. S653 bears the Phosphoserine mark. Residues 662 to 672 show a composition bias toward polar residues; the sequence is GLAQSNNLQVP. The span at 673–685 shows a compositional bias: low complexity; that stretch reads SSSEPSSLKGSTS. Over residues 694–706 the composition is skewed to basic and acidic residues; the sequence is VRKEQGGGCHSDT.

This sequence belongs to the G-protein coupled receptor Fz/Smo family. As to quaternary structure, interacts with LMBR1L. Ubiquitinated by ZNRF3, leading to its degradation by the proteasome. As to expression, detected in adult heart, brain, placenta, lung, liver, skeletal muscle, kidney, pancreas, thymus, prostate, testis, ovary, small intestine and colon. In the fetus, expressed in brain, lung, liver and kidney.

The protein localises to the membrane. The protein resides in the cell membrane. It is found in the cell surface. Its subcellular location is the apical cell membrane. It localises to the cytoplasmic vesicle membrane. The protein localises to the endoplasmic reticulum membrane. Receptor for Wnt proteins. Most of frizzled receptors are coupled to the beta-catenin canonical signaling pathway, which leads to the activation of disheveled proteins, inhibition of GSK-3 kinase, nuclear accumulation of beta-catenin and activation of Wnt target genes. A second signaling pathway involving PKC and calcium fluxes has been seen for some family members, but it is not yet clear if it represents a distinct pathway or if it can be integrated in the canonical pathway, as PKC seems to be required for Wnt-mediated inactivation of GSK-3 kinase. Both pathways seem to involve interactions with G-proteins. May be involved in transduction and intercellular transmission of polarity information during tissue morphogenesis and/or in differentiated tissues. Together with FZD3, is involved in the neural tube closure and plays a role in the regulation of the establishment of planar cell polarity (PCP), particularly in the orientation of asymmetric bundles of stereocilia on the apical faces of a subset of auditory and vestibular sensory cells located in the inner ear. This is Frizzled-6 (FZD6) from Homo sapiens (Human).